The following is a 202-amino-acid chain: FMN-dependent NADH:quinone oxidoreductase (202 aa).

Residues serine 10, 16 to 18 (SAS), and 96 to 99 (MWNF) contribute to the FMN site.

Belongs to the azoreductase type 1 family. As to quaternary structure, homodimer. The cofactor is FMN.

The enzyme catalyses 2 a quinone + NADH + H(+) = 2 a 1,4-benzosemiquinone + NAD(+). The catalysed reaction is N,N-dimethyl-1,4-phenylenediamine + anthranilate + 2 NAD(+) = 2-(4-dimethylaminophenyl)diazenylbenzoate + 2 NADH + 2 H(+). In terms of biological role, quinone reductase that provides resistance to thiol-specific stress caused by electrophilic quinones. Also exhibits azoreductase activity. Catalyzes the reductive cleavage of the azo bond in aromatic azo compounds to the corresponding amines. The chain is FMN-dependent NADH:quinone oxidoreductase from Beijerinckia indica subsp. indica (strain ATCC 9039 / DSM 1715 / NCIMB 8712).